The chain runs to 130 residues: MSLQICILTPDRVFWNQEAEEIILPTNTGQMGVLTNHAPIITALDIGIMSIRTQKDWTSVALMGGFALVKQNQVTVLVNSAESKETINSSEAEQAFLEAKEQLEKALGQKEKVEANFAFKRARARYQLVS.

It belongs to the ATPase epsilon chain family. In terms of assembly, F-type ATPases have 2 components, CF(1) - the catalytic core - and CF(0) - the membrane proton channel. CF(1) has five subunits: alpha(3), beta(3), gamma(1), delta(1), epsilon(1). CF(0) has three main subunits: a, b and c.

It localises to the plastid. The protein resides in the chloroplast thylakoid membrane. Functionally, produces ATP from ADP in the presence of a proton gradient across the membrane. This is ATP synthase epsilon chain, chloroplastic from Tupiella akineta (Green alga).